The primary structure comprises 127 residues: Fluoride-specific ion channel FluC (127 aa).

4 helical membrane-spanning segments follow: residues I4–A24, F34–F54, F65–L85, and F97–L117. Na(+) is bound by residues G77 and T80.

This sequence belongs to the fluoride channel Fluc/FEX (TC 1.A.43) family.

The protein resides in the cell inner membrane. The enzyme catalyses fluoride(in) = fluoride(out). With respect to regulation, na(+) is not transported, but it plays an essential structural role and its presence is essential for fluoride channel function. Functionally, fluoride-specific ion channel. Important for reducing fluoride concentration in the cell, thus reducing its toxicity. This is Fluoride-specific ion channel FluC from Bacteroides fragilis (strain ATCC 25285 / DSM 2151 / CCUG 4856 / JCM 11019 / LMG 10263 / NCTC 9343 / Onslow / VPI 2553 / EN-2).